Reading from the N-terminus, the 642-residue chain is Threonine--tRNA ligase (642 aa).

Positions 1–61 (MPVITLPDGS…SEDANLVIFT (61 aa)) constitute a TGS domain. Residues 243–534 (DHRKLAKKFD…LIEHYEGSFP (292 aa)) are catalytic. 3 residues coordinate Zn(2+): C334, H385, and H511.

It belongs to the class-II aminoacyl-tRNA synthetase family. As to quaternary structure, homodimer. Zn(2+) serves as cofactor.

It is found in the cytoplasm. The catalysed reaction is tRNA(Thr) + L-threonine + ATP = L-threonyl-tRNA(Thr) + AMP + diphosphate + H(+). Catalyzes the attachment of threonine to tRNA(Thr) in a two-step reaction: L-threonine is first activated by ATP to form Thr-AMP and then transferred to the acceptor end of tRNA(Thr). Also edits incorrectly charged L-seryl-tRNA(Thr). The polypeptide is Threonine--tRNA ligase (Cellvibrio japonicus (strain Ueda107) (Pseudomonas fluorescens subsp. cellulosa)).